A 244-amino-acid chain; its full sequence is 3-deoxy-manno-octulosonate cytidylyltransferase (244 aa).

It belongs to the KdsB family.

The protein localises to the cytoplasm. It carries out the reaction 3-deoxy-alpha-D-manno-oct-2-ulosonate + CTP = CMP-3-deoxy-beta-D-manno-octulosonate + diphosphate. The protein operates within nucleotide-sugar biosynthesis; CMP-3-deoxy-D-manno-octulosonate biosynthesis; CMP-3-deoxy-D-manno-octulosonate from 3-deoxy-D-manno-octulosonate and CTP: step 1/1. Its pathway is bacterial outer membrane biogenesis; lipopolysaccharide biosynthesis. Functionally, activates KDO (a required 8-carbon sugar) for incorporation into bacterial lipopolysaccharide in Gram-negative bacteria. In Rickettsia bellii (strain OSU 85-389), this protein is 3-deoxy-manno-octulosonate cytidylyltransferase.